The sequence spans 787 residues: Aminodeoxychorismate synthase (787 aa).

Positions 16-233 (HVLFIDSYDS…LKLSFINNVK (218 aa)) constitute a Glutamine amidotransferase type-1 domain. Active-site residues include C112, H207, and E209. Residues 304–787 (MSSSVISENT…KLESNLQIFM (484 aa)) form a PABB component region.

The protein in the C-terminal section; belongs to the anthranilate synthase component I family.

It is found in the cytoplasm. The enzyme catalyses chorismate + L-glutamine = 4-amino-4-deoxychorismate + L-glutamate. It functions in the pathway cofactor biosynthesis; tetrahydrofolate biosynthesis; 4-aminobenzoate from chorismate: step 1/2. Functionally, catalyzes the biosynthesis of 4-amino-4-deoxychorismate (ADC) from chorismate and glutamine. Required for the synthesis of 4-aminobenzoate (PABA), an important component in tetrahydrofolate biosynthesis. The protein is Aminodeoxychorismate synthase (ABZ1) of Saccharomyces cerevisiae (strain ATCC 204508 / S288c) (Baker's yeast).